Reading from the N-terminus, the 189-residue chain is Glutathione-dependent formaldehyde-activating enzyme (189 aa).

In terms of domain architecture, CENP-V/GFA spans 20–166 (FAGGTLVCAC…LRTIGLEPYD (147 aa)). Zn(2+) is bound by residues Cys-27, Cys-29, Cys-48, Cys-50, Cys-53, Cys-95, and Cys-98.

This sequence belongs to the Gfa family. Zn(2+) is required as a cofactor.

The catalysed reaction is S-(hydroxymethyl)glutathione = glutathione + formaldehyde. The protein operates within one-carbon metabolism; formaldehyde degradation; formate from formaldehyde (glutathione route): step 1/3. Functionally, catalyzes the condensation of formaldehyde and glutathione to S-hydroxymethylglutathione. This chain is Glutathione-dependent formaldehyde-activating enzyme, found in Mesorhizobium japonicum (strain LMG 29417 / CECT 9101 / MAFF 303099) (Mesorhizobium loti (strain MAFF 303099)).